The chain runs to 643 residues: DNA-directed RNA polymerase subunit beta' (643 aa).

C83, C85, C98, and C101 together coordinate Zn(2+). D480, D482, and D484 together coordinate Mg(2+).

Belongs to the RNA polymerase beta' chain family. RpoC1 subfamily. As to quaternary structure, in plastids the minimal PEP RNA polymerase catalytic core is composed of four subunits: alpha, beta, beta', and beta''. When a (nuclear-encoded) sigma factor is associated with the core the holoenzyme is formed, which can initiate transcription. It depends on Mg(2+) as a cofactor. The cofactor is Zn(2+).

It is found in the plastid. The protein resides in the organellar chromatophore. The enzyme catalyses RNA(n) + a ribonucleoside 5'-triphosphate = RNA(n+1) + diphosphate. Functionally, DNA-dependent RNA polymerase catalyzes the transcription of DNA into RNA using the four ribonucleoside triphosphates as substrates. This is DNA-directed RNA polymerase subunit beta' from Paulinella chromatophora.